The chain runs to 339 residues: Dihydroorotase (339 aa).

Residues histidine 12 and histidine 14 each coordinate Zn(2+). Substrate-binding positions include 14 to 16 and asparagine 40; that span reads HVR. Zn(2+) contacts are provided by lysine 94, histidine 133, histidine 167, and aspartate 239. At lysine 94 the chain carries N6-carboxylysine. Substrate is bound at residue histidine 133. Aspartate 239 is a catalytic residue. Substrate-binding residues include histidine 243 and alanine 255.

Belongs to the metallo-dependent hydrolases superfamily. DHOase family. Class II DHOase subfamily. As to quaternary structure, homodimer. The cofactor is Zn(2+).

It carries out the reaction (S)-dihydroorotate + H2O = N-carbamoyl-L-aspartate + H(+). The protein operates within pyrimidine metabolism; UMP biosynthesis via de novo pathway; (S)-dihydroorotate from bicarbonate: step 3/3. Catalyzes the reversible cyclization of carbamoyl aspartate to dihydroorotate. In Helicobacter pylori (strain HPAG1), this protein is Dihydroorotase.